A 549-amino-acid chain; its full sequence is Glucose-6-phosphate isomerase (549 aa).

Glutamate 353 (proton donor) is an active-site residue. Residues histidine 384 and lysine 513 contribute to the active site.

The protein belongs to the GPI family.

It is found in the cytoplasm. It catalyses the reaction alpha-D-glucose 6-phosphate = beta-D-fructose 6-phosphate. Its pathway is carbohydrate biosynthesis; gluconeogenesis. It participates in carbohydrate degradation; glycolysis; D-glyceraldehyde 3-phosphate and glycerone phosphate from D-glucose: step 2/4. Functionally, catalyzes the reversible isomerization of glucose-6-phosphate to fructose-6-phosphate. The polypeptide is Glucose-6-phosphate isomerase (Brucella canis (strain ATCC 23365 / NCTC 10854 / RM-666)).